Here is an 804-residue protein sequence, read N- to C-terminus: RasGAP-activating-like protein 1 (804 aa).

C2 domains follow at residues 1–105 and 116–231; these read MAKS…DSWI and VQGE…KGWF. Ca(2+) is bound by residues Asp21, Asp27, Asp74, Asp76, Asp82, Asp149, Asp155, Asp202, Asp204, and Asp210. The region spanning 317–545 is the Ras-GAP domain; that stretch reads GLAGRFLDYL…SRVRDFLDRL (229 aa). Residues 565 to 672 enclose the PH domain; sequence AIVREGYLLK…WLSALRKASA (108 aa). The Btk-type zinc-finger motif lies at 674 to 710; the sequence is NPNKLAACHPGAFRSARWTCCLQAERSAAGCSRTHSA. Zn(2+) is bound by residues His682, Cys693, Cys694, and Cys704.

Ca(2+) is required as a cofactor. In terms of tissue distribution, highly expressed in thyroid and adrenal medulla, lower expression in brain, spinal cord and trachea. Expressed in melanocytes.

In terms of biological role, probable inhibitory regulator of the Ras-cyclic AMP pathway. Plays a role in dendrite formation by melanocytes. The protein is RasGAP-activating-like protein 1 of Homo sapiens (Human).